The primary structure comprises 319 residues: Protein sprouty homolog 1 (319 aa).

Position 1 is an N-acetylmethionine (Met1). 2 disordered regions span residues 54–78 (TEGP…ERTH) and 100–160 (AVLP…QPKQ). The segment covering 69–78 (PRQEKHERTH) has biased composition (basic and acidic residues). Low complexity predominate over residues 112–131 (SRSTSTGSAASSGSNSSASS). The 113-residue stretch at 183-295 (QCGKCKCGEC…CYDWIHRPGC (113 aa)) folds into the SPR domain.

This sequence belongs to the sprouty family. As to quaternary structure, forms heterodimers with SPRY2. Interacts with TESK1. Interacts with CAV1 (via C-terminus).

Its subcellular location is the cytoplasm. It is found in the membrane. In terms of biological role, inhibits fibroblast growth factor (FGF)-induced retinal lens fiber differentiation, probably by inhibiting FGF-mediated phosphorylation of ERK1/2. Inhibits TGFB-induced epithelial-to-mesenchymal transition in lens epithelial cells. This chain is Protein sprouty homolog 1 (SPRY1), found in Homo sapiens (Human).